We begin with the raw amino-acid sequence, 251 residues long: Imidazole glycerol phosphate synthase subunit HisF (251 aa).

Catalysis depends on residues D11 and D130.

Belongs to the HisA/HisF family. Heterodimer of HisH and HisF.

The protein localises to the cytoplasm. The enzyme catalyses 5-[(5-phospho-1-deoxy-D-ribulos-1-ylimino)methylamino]-1-(5-phospho-beta-D-ribosyl)imidazole-4-carboxamide + L-glutamine = D-erythro-1-(imidazol-4-yl)glycerol 3-phosphate + 5-amino-1-(5-phospho-beta-D-ribosyl)imidazole-4-carboxamide + L-glutamate + H(+). The protein operates within amino-acid biosynthesis; L-histidine biosynthesis; L-histidine from 5-phospho-alpha-D-ribose 1-diphosphate: step 5/9. Its function is as follows. IGPS catalyzes the conversion of PRFAR and glutamine to IGP, AICAR and glutamate. The HisF subunit catalyzes the cyclization activity that produces IGP and AICAR from PRFAR using the ammonia provided by the HisH subunit. In Prosthecochloris aestuarii (strain DSM 271 / SK 413), this protein is Imidazole glycerol phosphate synthase subunit HisF.